We begin with the raw amino-acid sequence, 95 residues long: Ribonuclease kappa (95 aa).

2 helical membrane passes run 12–32 and 68–88; these read GLII…FFYI and CWIA…QFYM.

The protein belongs to the RNase K family.

Its subcellular location is the membrane. Its function is as follows. Endoribonuclease. Functionally, (Microbial infection) Required for the initial stages of clathrin-mediated endocytic uptake of a diverse set of flaviviruses, including dengue and West Nile. Not required for clathrin-mediated endocytosis and macropinocytosis. The sequence is that of Ribonuclease kappa from Drosophila melanogaster (Fruit fly).